The chain runs to 642 residues: Chaperone protein DnaK (642 aa).

At T196 the chain carries Phosphothreonine; by autocatalysis. Over residues 593–603 (STMYQTPSGDT) the composition is skewed to polar residues. Residues 593 to 642 (STMYQTPSGDTPPSEPETGASEESKGGDKTQGDGEVDAEYEVIDGNDKDK) form a disordered region. A compositionally biased stretch (basic and acidic residues) spans 614–624 (EESKGGDKTQG). A compositionally biased stretch (acidic residues) spans 626–636 (GEVDAEYEVID).

The protein belongs to the heat shock protein 70 family.

Functionally, acts as a chaperone. This is Chaperone protein DnaK from Chlorobium phaeobacteroides (strain BS1).